The following is a 204-amino-acid chain: LexA repressor (204 aa).

The H-T-H motif DNA-binding region spans 29–49; the sequence is RAEIADIMGFQSKNAASDHLR. Residues S123 and K160 each act as for autocatalytic cleavage activity in the active site.

The protein belongs to the peptidase S24 family. As to quaternary structure, homodimer.

It catalyses the reaction Hydrolysis of Ala-|-Gly bond in repressor LexA.. In terms of biological role, represses a number of genes involved in the response to DNA damage (SOS response), including recA and lexA. In the presence of single-stranded DNA, RecA interacts with LexA causing an autocatalytic cleavage which disrupts the DNA-binding part of LexA, leading to derepression of the SOS regulon and eventually DNA repair. This Alcanivorax borkumensis (strain ATCC 700651 / DSM 11573 / NCIMB 13689 / SK2) protein is LexA repressor.